The following is a 418-amino-acid chain: GTPase Obg (418 aa).

In terms of domain architecture, Obg spans 1-156 (MKFIDEITLN…KKLTLVLKVL (156 aa)). Positions 157–324 (ADVGFVGKPS…LKEALWQSVK (168 aa)) constitute an OBG-type G domain. GTP-binding positions include 163–170 (GKPSAGKS), 188–192 (FTTLV), 209–212 (DLPG), 278–281 (NKKD), and 305–307 (SAL). The Mg(2+) site is built by Ser170 and Thr190. An OCT domain is found at 339–417 (VFINFEADFN…IYDYEFVWGN (79 aa)).

It belongs to the TRAFAC class OBG-HflX-like GTPase superfamily. OBG GTPase family. In terms of assembly, monomer. It depends on Mg(2+) as a cofactor.

The protein localises to the cytoplasm. Functionally, an essential GTPase which binds GTP, GDP and possibly (p)ppGpp with moderate affinity, with high nucleotide exchange rates and a fairly low GTP hydrolysis rate. Plays a role in control of the cell cycle, stress response, ribosome biogenesis and in those bacteria that undergo differentiation, in morphogenesis control. This Mycoplasmopsis pulmonis (strain UAB CTIP) (Mycoplasma pulmonis) protein is GTPase Obg.